Consider the following 278-residue polypeptide: Large ribosomal subunit protein uL2 (278 aa).

Disordered stretches follow at residues 29–55 (PEKS…RHQG) and 225–278 (VMNP…NKKR). Residues 258 to 278 (RSNKKASNKYIVRRRTKNKKR) are compositionally biased toward basic residues.

It belongs to the universal ribosomal protein uL2 family. In terms of assembly, part of the 50S ribosomal subunit. Forms a bridge to the 30S subunit in the 70S ribosome. Post-translationally, the N-terminus is blocked. Phosphorylated on serine and threonine residues.

Its function is as follows. One of the primary rRNA binding proteins. Required for association of the 30S and 50S subunits to form the 70S ribosome, for tRNA binding and peptide bond formation. It has been suggested to have peptidyltransferase activity; this is somewhat controversial. Makes several contacts with the 16S rRNA in the 70S ribosome. This chain is Large ribosomal subunit protein uL2, found in Streptomyces collinus.